The primary structure comprises 199 residues: MRPLRCGERTQGIPLGLLAFWVTAARCLQSQGVSLYIPQSAINATVQQDILLSVDYICHGVPTIEWKYTPNWGVQRIVEWKPGTPANVSQSHRDRVCTFDNGSIQLFNVSVKDSGYYIVTVTEHPGSSQSGTILLRVSEIRYEDLHFVAVFFALLAAVAVVLISLMWVCNQCAYKFQRKRRYKLKESTTEEIEMKEVEC.

The first 27 residues, 1–27, serve as a signal peptide directing secretion; it reads MRPLRCGERTQGIPLGLLAFWVTAARC. Residues 28–146 lie on the Extracellular side of the membrane; sequence LQSQGVSLYI…VSEIRYEDLH (119 aa). The Ig-like C2-type domain occupies 35–138; sequence LYIPQSAINA…QSGTILLRVS (104 aa). N-linked (GlcNAc...) asparagine glycans are attached at residues Asn-43, Asn-87, and Asn-101. Residues 147-167 traverse the membrane as a helical segment; the sequence is FVAVFFALLAAVAVVLISLMW. The Cytoplasmic portion of the chain corresponds to 168–199; it reads VCNQCAYKFQRKRRYKLKESTTEEIEMKEVEC. The tract at residues 169–185 is important for CDC42-dependent filopodia induction; it reads CNQCAYKFQRKRRYKLK.

Can homooligomerize through cis interactions within the same cell membrane. N-glycosylated. In terms of tissue distribution, highly expressed in the central nervous system (CNS), with the highest expression in thalamus, hippocampus, cerebrum, midbrain and spinal cord. Also highly expressed in stomach, kidney and small intestine.

The protein resides in the cell membrane. The protein localises to the cell projection. It is found in the dendrite. It localises to the axon. Its function is as follows. Cell adhesion-like membrane protein of the central nervous system (CNS) which modulates both the position and complexity of central neurons by altering their membrane morphology and dynamics. Involved in the formation of neuronal dendrites and protrusions including dendritic filopodia. In synaptogenesis, regulates synapse formation by altering dendritic spine morphology and actin distribution. Promotes formation of unstable neuronal spines such as thin and branched types. Regulates neuronal morphogenesis and migration during cortical development in the brain. The chain is V-set and transmembrane domain-containing protein 5 from Mus musculus (Mouse).